We begin with the raw amino-acid sequence, 524 residues long: Keratin, type II cytoskeletal 72 (524 aa).

A head region spans residues 1–136 (MSRQLNLYPG…DPEIQKVRAQ (136 aa)). A coil 1A region spans residues 137–172 (EREQIKALNNKFASFIDKVRFLEQQNQVLGTKWELL). The IF rod domain maps to 137–450 (EREQIKALNN…KLLEGEECRM (314 aa)). A linker 1 region spans residues 173–191 (QQLDLNNCKNNLEPILEGY). Positions 192–283 (TSNLRKQLEM…CLYEGEIAQL (92 aa)) are coil 1B. A linker 12 region spans residues 284 to 307 (QSHISDTSVILSMDNNRDLDLDSI). The coil 2 stretch occupies residues 308–446 (IAQVRAQYEE…ATYRKLLEGE (139 aa)). Residues 447–524 (ECRMSGEYPN…SSCATKKASR (78 aa)) are tail. Residues 495–524 (KTKGSCGGSELKDAPAKTSGSSCATKKASR) form a disordered region.

Belongs to the intermediate filament family. As to quaternary structure, heterotetramer of two type I and two type II keratins.

Functionally, has a role in hair formation. Specific component of keratin intermediate filaments in the inner root sheath (IRS) of the hair follicle. The chain is Keratin, type II cytoskeletal 72 (KRT72) from Bos taurus (Bovine).